Reading from the N-terminus, the 543-residue chain is GPI mannosyltransferase 4 (543 aa).

Transmembrane regions (helical) follow at residues 5–25, 98–118, 176–196, 213–233, and 353–373; these read TYLLLLVIRVYFALSPSYLHP, VMFLLGFVLEDWAVYELVPFA, LAFIAVAGVFNRITFPAFLAI, PVSLFSFVGFGIFFFGIAVLV, and LFLAVWMIFNAALGFLMGIYH. N-linked (GlcNAc...) asparagine glycosylation occurs at Asn428.

Belongs to the glycosyltransferase 22 family. PIGZ subfamily.

Its subcellular location is the endoplasmic reticulum membrane. The protein operates within glycolipid biosynthesis; glycosylphosphatidylinositol-anchor biosynthesis. Its function is as follows. Alpha-1,2-mannosyltransferase involved in glycosylphosphatidylinositol-anchor biosynthesis. Transfers a fourth mannose to trimannosyl-GPIs during GPI precursor assembly. The presence of a fourth mannose in GPI is essential in fungi. The sequence is that of GPI mannosyltransferase 4 (smp3) from Aspergillus oryzae (strain ATCC 42149 / RIB 40) (Yellow koji mold).